The primary structure comprises 364 residues: Dual-specificity RNA methyltransferase RlmN (364 aa).

Glu91 acts as the Proton acceptor in catalysis. The Radical SAM core domain maps to 102 to 337; sequence GTLRITQCLS…AIIRKSKGQD (236 aa). An intrachain disulfide couples Cys109 to Cys342. [4Fe-4S] cluster contacts are provided by Cys116, Cys120, and Cys123. S-adenosyl-L-methionine is bound by residues 169-170, Ser201, 223-225, and Asn299; these read GE and SLH. Cys342 (S-methylcysteine intermediate) is an active-site residue.

It belongs to the radical SAM superfamily. RlmN family. [4Fe-4S] cluster is required as a cofactor.

It is found in the cytoplasm. It carries out the reaction adenosine(2503) in 23S rRNA + 2 reduced [2Fe-2S]-[ferredoxin] + 2 S-adenosyl-L-methionine = 2-methyladenosine(2503) in 23S rRNA + 5'-deoxyadenosine + L-methionine + 2 oxidized [2Fe-2S]-[ferredoxin] + S-adenosyl-L-homocysteine. The enzyme catalyses adenosine(37) in tRNA + 2 reduced [2Fe-2S]-[ferredoxin] + 2 S-adenosyl-L-methionine = 2-methyladenosine(37) in tRNA + 5'-deoxyadenosine + L-methionine + 2 oxidized [2Fe-2S]-[ferredoxin] + S-adenosyl-L-homocysteine. Functionally, specifically methylates position 2 of adenine 2503 in 23S rRNA and position 2 of adenine 37 in tRNAs. m2A2503 modification seems to play a crucial role in the proofreading step occurring at the peptidyl transferase center and thus would serve to optimize ribosomal fidelity. The sequence is that of Dual-specificity RNA methyltransferase RlmN from Nitratidesulfovibrio vulgaris (strain ATCC 29579 / DSM 644 / CCUG 34227 / NCIMB 8303 / VKM B-1760 / Hildenborough) (Desulfovibrio vulgaris).